A 320-amino-acid polypeptide reads, in one-letter code: uncharacterized protein (320 aa).

It belongs to the anthranilate phosphoribosyltransferase family.

This is an uncharacterized protein from Escherichia coli (strain K12).